The chain runs to 566 residues: DBIRD complex subunit ZNF326 (566 aa).

2 disordered regions span residues 19-81 (HCGV…ESYD) and 145-180 (RPGFMEDRGRESYSSYSSFSSPHMKPAPVGSRGRGT). The segment covering 59 to 73 (SHGGGGGGGGGGGNR) has biased composition (gly residues). Over residues 156-165 (SYSSYSSFSS) the composition is skewed to low complexity. The short motif at 240-263 (KRKMMPQPYNKPGGTFIKKPKMTK) is the Bipartite nuclear localization signal element. The tract at residues 314-347 (FGDSKGEGKSEEEEKRRIEARREKQRRRREKNSE) is disordered. Residues 317 to 335 (SKGEGKSEEEEKRRIEARR) are compositionally biased toward basic and acidic residues. 2 C2H2 AKAP95-type zinc fingers span residues 359–381 (CSFCKFRTFEEKEIESHLESAAH) and 452–475 (CSACSVYVPALHSSVQQHLKSPDH). The segment at 516–566 (PFEINDQAQEQQTEEEDKAEEPAEGEEEEEEEEEEETEEQTDFTLDHTEDN) is disordered. A compositionally biased stretch (acidic residues) spans 527 to 556 (QTEEEDKAEEPAEGEEEEEEEEEEETEEQT).

The protein belongs to the AKAP95 family. Component of the DBIRD complex.

The protein resides in the nucleus. Core component of the DBIRD complex, a multiprotein complex that acts at the interface between core mRNP particles and RNA polymerase II (RNAPII) and integrates transcript elongation with the regulation of alternative splicing. The sequence is that of DBIRD complex subunit ZNF326 (ZNF326) from Gallus gallus (Chicken).